Here is a 377-residue protein sequence, read N- to C-terminus: Mitochondrial pyrimidine nucleotide transporter RIM2 (377 aa).

Solcar repeat units follow at residues 50–163, 173–262, and 286–375; these read VKPW…TKDM, ETPM…MKRL, and KEWC…VIRL. 6 consecutive transmembrane segments (helical) span residues 53 to 73, 131 to 151, 179 to 199, 238 to 258, 286 to 306, and 347 to 368; these read WVHF…TCPF, GFRS…PARS, LMAA…IWLI, GLSA…LYEQ, KEWC…SIAT, and MYSG…MFGT.

This sequence belongs to the mitochondrial carrier (TC 2.A.29) family.

It is found in the mitochondrion inner membrane. It carries out the reaction 5-methyl-UTP(out) + UTP(in) = 5-methyl-UTP(in) + UTP(out). Functionally, mitochondrial transporter that imports/exports pyrimidine nucleotides into and from mitochondria. Selectively transports uridine, thymidine, and cytosine (deoxy)nucleoside di- and triphosphates by an antiport mechanism. Also transports, with lower efficiency, uridine, thymidine, and cytosine (deoxy)nucleoside monophosphates as well as guanosine (deoxy)nucleoside di- and triphosphate. May import (deoxy)nucleoside triphosphates in exchange for intramitochondrial (deoxy)nucleoside monophosphates, thus providing precursors necessary for de novo synthesis of mitochondrial DNA and RNA while exporting products of their catabolism. Mediates the transport of iron and other divalent metal ions like copper and zinc across the mitochondrial inner membrane in a pyrimidine nucleotide-dependent fashion. Catalyzes the co-import of pyrimidine nucleotides and divalent metal ions including ferrous iron. Participates in mitochondrial genome maintenance, regulation of mitochondrial membrane potential and mitochondrial respiration. The protein is Mitochondrial pyrimidine nucleotide transporter RIM2 (RIM2) of Saccharomyces cerevisiae (strain ATCC 204508 / S288c) (Baker's yeast).